Here is a 386-residue protein sequence, read N- to C-terminus: G2/mitotic-specific cyclin-B2 (386 aa).

Residues 45 to 64 (TNGKVGPSKKPSKASCAQKP) are disordered.

This sequence belongs to the cyclin family. Cyclin AB subfamily. As to quaternary structure, interacts with the CDK1 protein kinase to form a serine/threonine kinase holoenzyme complex also known as maturation promoting factor (MPF). The cyclin subunit imparts substrate specificity to the complex.

In terms of biological role, essential for the control of the cell cycle at the G2/M (mitosis) transition. The polypeptide is G2/mitotic-specific cyclin-B2 (ccnb2) (Oryzias luzonensis (Luzon ricefish)).